Here is a 217-residue protein sequence, read N- to C-terminus: Uracil-DNA glycosylase (217 aa).

Asp62 functions as the Proton acceptor in the catalytic mechanism.

Belongs to the uracil-DNA glycosylase (UDG) superfamily. UNG family.

The protein localises to the cytoplasm. The enzyme catalyses Hydrolyzes single-stranded DNA or mismatched double-stranded DNA and polynucleotides, releasing free uracil.. Functionally, excises uracil residues from the DNA which can arise as a result of misincorporation of dUMP residues by DNA polymerase or due to deamination of cytosine. The protein is Uracil-DNA glycosylase of Streptococcus pneumoniae serotype 19F (strain G54).